The sequence spans 340 residues: DNA repair protein RAD51 homolog B (340 aa).

Residues 1–22 (MSSSSAHQKASPPIEEEATEHG) form a disordered region. Residues 49-78 (TVESVAYSPRKDLLQIKGISEAKVDKIIEA) form the HhH domain. 128-135 (GEFRSGKT) serves as a coordination point for ATP.

The protein belongs to the RecA family. RAD51 subfamily. Self-associates and may interact with XRCC3 homolog. In terms of tissue distribution, highly expressed in mitotic and meiotic tissues, but low levels in differentiated tissues.

It is found in the nucleus. Its function is as follows. Binds to single and double-stranded DNA and exhibits DNA-dependent ATPase activity. Unwinds duplex DNA. Component of the meiotic recombination pathway. Seems to play a role in mediating chromosome homology search, chromosome pairing and synapsis at early stages and probably chromosome crossing-over at later stages in meiosis. Probably is involved in the repair of meiotic double strand breaks (DBSs) and in homologous recombination. The chain is DNA repair protein RAD51 homolog B (RAD51B) from Zea mays (Maize).